Here is an 802-residue protein sequence, read N- to C-terminus: Oligophrenin-1 (802 aa).

The 104-residue stretch at 265–368 (QPTIEGYLYT…WMEAMDGKEP (104 aa)) folds into the PH domain. The region spanning 380–564 (MELNEVGFKF…ILIEHFGKIY (185 aa)) is the Rho-GAP domain. Disordered stretches follow at residues 606–665 (SLDE…SEPC) and 681–802 (GTKA…GDES). Positions 617 to 627 (QTPNGTITSNL) are enriched in polar residues. Residues 716–732 (HHKEGDTDGFSKVRPPG) are compositionally biased toward basic and acidic residues.

As to quaternary structure, interacts with HOMER1. Interacts with AMPA receptor complexes. Interacts with SH3GL2 (endophilin-A1). Interacts (via C-terminus) with NR1D1.

The protein localises to the postsynapse. The protein resides in the presynapse. It is found in the cell projection. It localises to the axon. Its subcellular location is the dendritic spine. The protein localises to the dendrite. The protein resides in the cytoplasm. Functionally, stimulates GTP hydrolysis of members of the Rho family. Its action on RHOA activity and signaling is implicated in growth and stabilization of dendritic spines, and therefore in synaptic function. Critical for the stabilization of AMPA receptors at postsynaptic sites. Critical for the regulation of synaptic vesicle endocytosis at presynaptic terminals. Required for the localization of NR1D1 to dendrites, can suppress its repressor activity and protect it from proteasomal degradation. In Mus musculus (Mouse), this protein is Oligophrenin-1 (Ophn1).